Consider the following 482-residue polypeptide: Catalase (482 aa).

Positions 1-11 are enriched in polar residues; it reads MNAMTNKTLTT. Positions 1-21 are disordered; sequence MNAMTNKTLTTAAGAPVADNN. Active-site residues include His-57 and Asn-130. Heme is bound at residue Tyr-340.

Belongs to the catalase family. Homodimer. Heme is required as a cofactor.

The enzyme catalyses 2 H2O2 = O2 + 2 H2O. Its function is as follows. Decomposes hydrogen peroxide into water and oxygen; serves to protect cells from the toxic effects of hydrogen peroxide. The sequence is that of Catalase (katA) from Bordetella bronchiseptica (strain ATCC BAA-588 / NCTC 13252 / RB50) (Alcaligenes bronchisepticus).